Consider the following 571-residue polypeptide: Medium/long-chain-fatty-acid--CoA ligase FadD8 (571 aa).

Residues 1–22 (MSTAGDDAVGVPPACGGRSDAV) are disordered.

This sequence belongs to the ATP-dependent AMP-binding enzyme family.

It carries out the reaction a medium-chain fatty acid + ATP + CoA = a medium-chain fatty acyl-CoA + AMP + diphosphate. It catalyses the reaction a long-chain fatty acid + ATP + CoA = a long-chain fatty acyl-CoA + AMP + diphosphate. The enzyme catalyses hexanoate + ATP + CoA = hexanoyl-CoA + AMP + diphosphate. The catalysed reaction is dodecanoate + ATP + CoA = dodecanoyl-CoA + AMP + diphosphate. It carries out the reaction hexadecanoate + ATP + CoA = hexadecanoyl-CoA + AMP + diphosphate. It participates in lipid metabolism; fatty acid metabolism. In terms of biological role, catalyzes the activation of medium/long-chain fatty acids as acyl-coenzyme A (acyl-CoA). The protein is Medium/long-chain-fatty-acid--CoA ligase FadD8 of Mycobacterium tuberculosis (strain ATCC 25618 / H37Rv).